Here is a 331-residue protein sequence, read N- to C-terminus: B-box zinc finger protein 21 (331 aa).

Zn(2+)-binding residues include C5, C8, C28, H34, C60, C63, C83, and H93. Residues C5–L47 form a B box-type 1; atypical zinc finger. Residues C60–L102 form a B box-type 2; atypical zinc finger. Low complexity-rich tracts occupy residues K115–S126 and N228–N238. 2 disordered regions span residues K115–A167 and D209–S241.

As to quaternary structure, interacts with COP1, HY5 and BBX32. Interacts with FLZ1.

It localises to the nucleus. Transcription activator that acts as a positive regulator of seedling photomorphogenesis. Acts downstream of COP1 and play an important role in early and long-term adjustment of the shade avoidance syndrome (SAS) responses in natural environments. In Arabidopsis thaliana (Mouse-ear cress), this protein is B-box zinc finger protein 21.